We begin with the raw amino-acid sequence, 327 residues long: GMP reductase (327 aa).

Residue cysteine 176 is the Thioimidate intermediate of the active site. Residue 205 to 228 (IIADGGIRTHGDIAKSIRFGASMV) participates in NADP(+) binding.

This sequence belongs to the IMPDH/GMPR family. GuaC type 2 subfamily.

The catalysed reaction is IMP + NH4(+) + NADP(+) = GMP + NADPH + 2 H(+). Catalyzes the irreversible NADPH-dependent deamination of GMP to IMP. It functions in the conversion of nucleobase, nucleoside and nucleotide derivatives of G to A nucleotides, and in maintaining the intracellular balance of A and G nucleotides. The chain is GMP reductase from Streptococcus suis (strain 05ZYH33).